The primary structure comprises 929 residues: Dual specificity protein phosphatase PHS1 (929 aa).

2 disordered regions span residues methionine 1–aspartate 27 and proline 545–serine 618. Composition is skewed to basic and acidic residues over residues histidine 552–methionine 580 and glutamate 591–histidine 606. Residues lysine 703–glycine 848 form the Tyrosine-protein phosphatase domain. Cysteine 792 (phosphocysteine intermediate) is an active-site residue. Substrate is bound at residue cysteine 792–arginine 798. The short motif at glutamine 903–leucine 911 is the Nuclear export signal element.

Interacts with MPK18. Expressed in roots, leaves and flowers.

The protein resides in the cytoplasm. It carries out the reaction O-phospho-L-seryl-[protein] + H2O = L-seryl-[protein] + phosphate. The enzyme catalyses O-phospho-L-threonyl-[protein] + H2O = L-threonyl-[protein] + phosphate. The catalysed reaction is O-phospho-L-tyrosyl-[protein] + H2O = L-tyrosyl-[protein] + phosphate. Functionally, probable dual specificity phosphatase that binds and dephosphorylates MPK18, modulating the organization and dynamics of cortical microtubules. Acts as a negative regulator of abscisic acid (ABA) signaling during seed germination and light-induced stomata aperture. This is Dual specificity protein phosphatase PHS1 (PHS1) from Arabidopsis thaliana (Mouse-ear cress).